The primary structure comprises 285 residues: Formamidopyrimidine-DNA glycosylase (285 aa).

Pro-2 acts as the Schiff-base intermediate with DNA in catalysis. The Proton donor role is filled by Glu-3. Lys-61 (proton donor; for beta-elimination activity) is an active-site residue. 3 residues coordinate DNA: His-102, Arg-121, and Lys-163. The FPG-type zinc-finger motif lies at 249 to 283; it reads NAYGQAGKPCARCGTPIARETFMNRGSHFCNRCQK. Arg-273 (proton donor; for delta-elimination activity) is an active-site residue.

Belongs to the FPG family. Monomer. Requires Zn(2+) as cofactor.

The enzyme catalyses Hydrolysis of DNA containing ring-opened 7-methylguanine residues, releasing 2,6-diamino-4-hydroxy-5-(N-methyl)formamidopyrimidine.. It catalyses the reaction 2'-deoxyribonucleotide-(2'-deoxyribose 5'-phosphate)-2'-deoxyribonucleotide-DNA = a 3'-end 2'-deoxyribonucleotide-(2,3-dehydro-2,3-deoxyribose 5'-phosphate)-DNA + a 5'-end 5'-phospho-2'-deoxyribonucleoside-DNA + H(+). Its function is as follows. Involved in base excision repair of DNA damaged by oxidation or by mutagenic agents. Acts as a DNA glycosylase that recognizes and removes damaged bases. Has a preference for oxidized purines, such as 7,8-dihydro-8-oxoguanine (8-oxoG). Has AP (apurinic/apyrimidinic) lyase activity and introduces nicks in the DNA strand. Cleaves the DNA backbone by beta-delta elimination to generate a single-strand break at the site of the removed base with both 3'- and 5'-phosphates. In Corynebacterium efficiens (strain DSM 44549 / YS-314 / AJ 12310 / JCM 11189 / NBRC 100395), this protein is Formamidopyrimidine-DNA glycosylase.